The chain runs to 319 residues: Mercury resistance probable Hg transport protein (319 aa).

Hg(2+) contacts are provided by C298, C299, C318, and C319.

The polypeptide is Mercury resistance probable Hg transport protein (Streptomyces lividans).